The chain runs to 286 residues: Beta-lactamase SHV-29 (286 aa).

The first 21 residues, 1-21 (MRYIRLCIISLLATLPLAVHA), serve as a signal peptide directing secretion. The Acyl-ester intermediate role is filled by Ser66. The cysteines at positions 73 and 119 are disulfide-linked. Residue Glu164 is the Proton acceptor of the active site. Substrate is bound at residue 230-232 (KTG).

The protein belongs to the class-A beta-lactamase family.

The enzyme catalyses a beta-lactam + H2O = a substituted beta-amino acid. This is Beta-lactamase SHV-29 (bla) from Klebsiella pneumoniae.